A 227-amino-acid polypeptide reads, in one-letter code: Large ribosomal subunit protein uL3 (227 aa).

It belongs to the universal ribosomal protein uL3 family. As to quaternary structure, part of the 50S ribosomal subunit. Forms a cluster with proteins L14 and L19.

Functionally, one of the primary rRNA binding proteins, it binds directly near the 3'-end of the 23S rRNA, where it nucleates assembly of the 50S subunit. The protein is Large ribosomal subunit protein uL3 of Leuconostoc citreum (strain KM20).